We begin with the raw amino-acid sequence, 200 residues long: uncharacterized protein (200 aa).

Residues 104–124 (SNLLICFLFLCGLYHISVFTG) traverse the membrane as a helical segment.

Its subcellular location is the membrane. This is an uncharacterized protein from Escherichia coli (strain K12).